We begin with the raw amino-acid sequence, 2276 residues long: Protein Ycf2 (2276 aa).

Gly-1621–Ser-1628 contacts ATP.

This sequence belongs to the Ycf2 family.

It localises to the plastid. The protein resides in the chloroplast stroma. In terms of biological role, probable ATPase of unknown function. Its presence in a non-photosynthetic plant (Epifagus virginiana) and experiments in tobacco indicate that it has an essential function which is probably not related to photosynthesis. The sequence is that of Protein Ycf2 from Guizotia abyssinica (Niger).